Here is a 147-residue protein sequence, read N- to C-terminus: Nucleoside diphosphate kinase (147 aa).

ATP contacts are provided by K9, F57, R85, T91, R102, and N112. Catalysis depends on H115, which acts as the Pros-phosphohistidine intermediate.

Belongs to the NDK family. As to quaternary structure, homotetramer. It depends on Mg(2+) as a cofactor.

It is found in the cytoplasm. It catalyses the reaction a 2'-deoxyribonucleoside 5'-diphosphate + ATP = a 2'-deoxyribonucleoside 5'-triphosphate + ADP. It carries out the reaction a ribonucleoside 5'-diphosphate + ATP = a ribonucleoside 5'-triphosphate + ADP. Functionally, major role in the synthesis of nucleoside triphosphates other than ATP. The ATP gamma phosphate is transferred to the NDP beta phosphate via a ping-pong mechanism, using a phosphorylated active-site intermediate. This Brevibacillus brevis (strain 47 / JCM 6285 / NBRC 100599) protein is Nucleoside diphosphate kinase.